We begin with the raw amino-acid sequence, 297 residues long: Protein CANDIDATE G-PROTEIN COUPLED RECEPTOR 8 (297 aa).

A glycan (N-linked (GlcNAc...) asparagine) is linked at N20. The next 7 membrane-spanning stretches (helical) occupy residues 34-54 (GFLH…YLAY), 70-90 (IMIA…AWCC), 107-127 (LTLF…AFLF), 142-162 (FLIS…FLFG), 180-200 (WGLW…VFLM), 215-235 (FYNY…ASAF), and 242-262 (FGFW…LPLL).

It belongs to the UPF0359 family.

The protein resides in the membrane. Functionally, G-protein coupled receptor. Plays a role in plants and microbes interactions. This chain is Protein CANDIDATE G-PROTEIN COUPLED RECEPTOR 8, found in Arabidopsis thaliana (Mouse-ear cress).